The chain runs to 312 residues: Malate dehydrogenase (312 aa).

Residues 7–13 (GAAGGIG) and D34 contribute to the NAD(+) site. Positions 81 and 87 each coordinate substrate. NAD(+)-binding positions include N94 and 117–119 (ITN). Positions 119 and 153 each coordinate substrate. The Proton acceptor role is filled by H177. M227 is a binding site for NAD(+).

Belongs to the LDH/MDH superfamily. MDH type 1 family. In terms of assembly, homodimer.

It carries out the reaction (S)-malate + NAD(+) = oxaloacetate + NADH + H(+). In terms of biological role, catalyzes the reversible oxidation of malate to oxaloacetate. The sequence is that of Malate dehydrogenase from Salmonella agona (strain SL483).